A 345-amino-acid polypeptide reads, in one-letter code: tRNA-specific 2-thiouridylase MnmA (345 aa).

ATP-binding positions include 6 to 13 (AMSGGVDS) and Leu-32. The active-site Nucleophile is Cys-100. Residues Cys-100 and Cys-197 are joined by a disulfide bond. Gly-124 contacts ATP. The segment at 146 to 148 (RDQ) is interaction with tRNA. Cys-197 functions as the Cysteine persulfide intermediate in the catalytic mechanism.

The protein belongs to the MnmA/TRMU family.

It is found in the cytoplasm. It carries out the reaction S-sulfanyl-L-cysteinyl-[protein] + uridine(34) in tRNA + AH2 + ATP = 2-thiouridine(34) in tRNA + L-cysteinyl-[protein] + A + AMP + diphosphate + H(+). Catalyzes the 2-thiolation of uridine at the wobble position (U34) of tRNA, leading to the formation of s(2)U34. This chain is tRNA-specific 2-thiouridylase MnmA, found in Acidiphilium cryptum (strain JF-5).